The sequence spans 292 residues: Sulfofructosephosphate aldolase (292 aa).

The Schiff-base intermediate with substrate role is filled by Lys193.

It belongs to the aldolase LacD family. In terms of assembly, homotetramer.

It catalyses the reaction 6-deoxy-6-sulfo-D-fructose 1-phosphate = (2S)-3-sulfolactaldehyde + dihydroxyacetone phosphate. Cleaves 6-deoxy-6-sulfo-D-fructose 1-phosphate (SFP) to form dihydroxyacetone phosphate (DHAP) and 3-sulfolactaldehyde (SLA). This is Sulfofructosephosphate aldolase (yihT) from Escherichia coli (strain K12).